Reading from the N-terminus, the 138-residue chain is Large ribosomal subunit protein uL16 (138 aa).

It belongs to the universal ribosomal protein uL16 family. Part of the 50S ribosomal subunit.

Functionally, binds 23S rRNA and is also seen to make contacts with the A and possibly P site tRNAs. The sequence is that of Large ribosomal subunit protein uL16 from Anaeromyxobacter sp. (strain Fw109-5).